The sequence spans 1841 residues: Sodium channel protein type 4 subunit alpha (1841 aa).

The Cytoplasmic portion of the chain corresponds to 1 to 131 (MASSSLPTLV…RVAIKVLIHA (131 aa)). The span at 32–60 (AMEEEARLQRNKQMEIEEPERKPRSDLEA) shows a compositional bias: basic and acidic residues. The disordered stretch occupies residues 32–63 (AMEEEARLQRNKQMEIEEPERKPRSDLEAGKN). An I repeat occupies 113–448 (MLSPFSIVRR…VVAMAYAEQN (336 aa)). The chain crosses the membrane as a helical span at residues 132–150 (LFSMFIMITILTNCVFMTM). Over 151–157 (SNPPSWS) the chain is Extracellular. The helical transmembrane segment at 158–178 (KDVEYTFTGIYTFESLIKMLA) threads the bilayer. At 179–192 (RGFCIDDFTFLRDP) the chain is on the cytoplasmic side. The chain crosses the membrane as a helical span at residues 193-210 (WNWLDFSVITMAYVTEFV). Topologically, residues 211 to 216 (DLGNIS) are extracellular. N214 carries an N-linked (GlcNAc...) asparagine glycan. A helical membrane pass occupies residues 217–233 (ALRTFRVLRALKTITVI). Over 234–252 (PGLKTIVGALIQSVKKLSD) the chain is Cytoplasmic. A helical transmembrane segment spans residues 253-272 (VMILTVFCLSVFALVGLQLF). Residues 273 to 385 (MGNLRQKCVR…PNYGYTSYDT (113 aa)) lie on the Extracellular side of the membrane. A disulfide bridge connects residues C280 and C354. N288, N291, N297, N303, N315, N327, and N356 each carry an N-linked (GlcNAc...) asparagine glycan. Cysteines 363 and 369 form a disulfide. An intramembrane region (pore-forming) is located at residues 386–410 (FSWAFLALFRLMTQDYWENLFQLTL). Topologically, residues 411 to 417 (RAAGKTY) are extracellular. Residues 418–438 (MIFFVVIIFLGSFYLINLILA) traverse the membrane as a helical segment. Residues 439 to 572 (VVAMAYAEQN…HIILLIVMDP (134 aa)) are Cytoplasmic-facing. The disordered stretch occupies residues 484–522 (ALEGGEEADGDPTHSKDCNGSLDTSGEKGPPRPSCSAES). The II repeat unit spans residues 554–826 (CCAPWVKFKH…QIAIGRIKWG (273 aa)). The chain crosses the membrane as a helical span at residues 573–591 (FVDLGITICIVLNTLFMAM). Residues 592–602 (EHYPMTEHFDN) lie on the Extracellular side of the membrane. Residues 603–622 (VLSVGNLVFTGIFTAEMVLK) form a helical membrane-spanning segment. Residues 623–636 (LIAMDPYEYFQQGW) lie on the Cytoplasmic side of the membrane. The chain crosses the membrane as a helical span at residues 637–656 (NIFDSFIVTLSLVELGLANV). Residues 657–658 (QG) are Extracellular-facing. Residues 659–676 (LSVLRSFRLLRVFKLAKS) form a helical membrane-spanning segment. Residues 677–692 (WPTLNMLIKIIGNSVG) lie on the Cytoplasmic side of the membrane. Residues 693–711 (ALGNLTLVLAIIVFIFAVV) traverse the membrane as a helical segment. At 712–740 (GMQLFGKSYKECVCKIASDCSLPRWHMHD) the chain is on the extracellular side. Cysteines 725 and 731 form a disulfide. The pore-forming intramembrane region spans 741–761 (FFHSFLIVFRILCGEWIETMW). Residues 762–772 (DCMEVAGQAMC) lie on the Extracellular side of the membrane. The cysteines at positions 763 and 772 are disulfide-linked. The chain crosses the membrane as a helical span at residues 773-791 (LTVFLMVMVIGNLVVLNLF). At 792–1026 (LALLLSSFSA…ACFKIVEHNW (235 aa)) the chain is on the cytoplasmic side. Disordered regions lie at residues 854–896 (EPGG…LTDG) and 925–983 (SDLE…EGEL). The segment covering 867-887 (EDEKKEPPPEDGNKELKDNHI) has biased composition (basic and acidic residues). Acidic residues-rich tracts occupy residues 925–941 (SDLE…FSEP) and 969–983 (EDPE…EGEL). The III repeat unit spans residues 1007 to 1320 (RGKMWWTLRR…KKYYNAMKKL (314 aa)). Residues 1027-1044 (FETFIVFMILLSSGALAF) form a helical membrane-spanning segment. Residues 1045–1057 (EDIYIEQRRVIRT) lie on the Extracellular side of the membrane. A helical membrane pass occupies residues 1058-1076 (ILEYADKVFTYIFILEMLL). Over 1077–1090 (KWVAYGFKVYFTNA) the chain is Cytoplasmic. The chain crosses the membrane as a helical span at residues 1091–1109 (WCWLDFLIVDVSIISLVAN). Topologically, residues 1110–1117 (WLGYSELG) are extracellular. The chain crosses the membrane as a helical span at residues 1118 to 1136 (PIKSLRTLRALRPLRALSR). Residues 1137–1153 (FEGMRVVVNALLGAIPS) lie on the Cytoplasmic side of the membrane. A helical transmembrane segment spans residues 1154 to 1173 (IMNVLLVCLIFWLIFSIMGV). Over 1174–1224 (NLFAGKFYYCINTTTSERFDISVVNNKSECESLMYTGQVRWMNVKVNYDNV) the chain is Extracellular. C1183 and C1203 are joined by a disulfide. N-linked (GlcNAc...) asparagine glycans are attached at residues N1185 and N1199. An intramembrane region (pore-forming) is located at residues 1225–1246 (GLGYLSLLQVATFKGWMDIMYA). The Extracellular portion of the chain corresponds to 1247-1263 (AVDSREKEEQPDYEVNL). Residues 1264–1285 (YMYLYFVIFIIFGSFFTLNLFI) form a helical membrane-spanning segment. The Cytoplasmic portion of the chain corresponds to 1286 to 1348 (GVIIDNFNQQ…MVYDFVTKQV (63 aa)). Residues 1304–1306 (IFM) form an important for rapid channel inactivation region. The stretch at 1329 to 1627 (IPRPQNKIQG…WEKFDPDATQ (299 aa)) is one IV repeat. The chain crosses the membrane as a helical span at residues 1349-1366 (FDISIMILICLNMVTMMV). At 1367-1377 (ETDDQSQLKVD) the chain is on the extracellular side. A helical transmembrane segment spans residues 1378-1396 (ILYNINMVFIIVFTGECVL). At 1397 to 1408 (KMFALRHYYFTI) the chain is on the cytoplasmic side. A helical membrane pass occupies residues 1409-1426 (GWNIFDFVVVILSIVGLA). Residues 1427–1439 (LSDLIQKYFVSPT) lie on the Extracellular side of the membrane. Residues 1440–1456 (LFRVIRLARIGRVLRLI) form a helical membrane-spanning segment. Topologically, residues 1457 to 1475 (RGAKGIRTLLFALMMSLPA) are cytoplasmic. A helical transmembrane segment spans residues 1476 to 1493 (LFNIGLLLFLVMFIYSIF). Residues 1494 to 1515 (GMSNFAYVKKESGIDDMFNFET) are Extracellular-facing. The segment at residues 1516–1538 (FGNSIICLFEITTSAGWDGLLNP) is an intramembrane region (pore-forming). The Extracellular segment spans residues 1539-1568 (ILNSGPPDCDPTLENPGTNIKGDCGNPSIG). Residues C1547 and C1562 are joined by a disulfide bond. A helical transmembrane segment spans residues 1569–1591 (ICFFCSYIIISFLIVVNMYIAII). At 1592–1841 (LENFNVATEE…VRPGVKESLV (250 aa)) the chain is on the cytoplasmic side. Residues 1721 to 1750 (EEVCAIKIQRAYRRHLLQRSVKQASYMYRH) enclose the IQ domain. The span at 1776 to 1794 (SEKEDNGVQSQGEKEKDST) shows a compositional bias: basic and acidic residues. The interval 1776-1841 (SEKEDNGVQS…VRPGVKESLV (66 aa)) is disordered. Over residues 1801–1812 (TEVTAPSSSDTA) the composition is skewed to polar residues. Pro residues predominate over residues 1814–1826 (TPPPPSPPPPSSP).

Belongs to the sodium channel (TC 1.A.1.10) family. Nav1.4/SCN4A subfamily. In terms of assembly, the Nav1.4 voltage-gated sodium channel consists of an ion-conducting alpha subunit SCN4A which is functional on its own and a regulatory beta subunit SCN1B. SCN1B strongly enhances the presence of SCN4A at the cell surface. SCN1B is also required for rapid channel inactivation and recovery after inactivation. It prevents the decrease of channel activity in response to repetitive, high-frequency depolarizations. Interacts with the syntrophins SNTA1, SNTB1 and SNTB2 (via PDZ domain); probably links SCN4A to the actin cytoskeleton and the extracellular matrix via the dystrophin-associated protein complex and regulates its localization in muscle cells. Interacts with TMEM233; probable regulator of the channel. In terms of tissue distribution, detected in quadriceps muscle (at protein level). Detected in hind-limb skeletal muscles, but not in heart or brain. Detected at low levels in the myocardium. According to Pubme=26427606 detected also in brain.

It is found in the cell membrane. It carries out the reaction Na(+)(in) = Na(+)(out). Its activity is regulated as follows. The channel is inhibited by tetrodotoxin. Functionally, pore-forming subunit of Nav1.4, a voltage-gated sodium (Nav) channel that directly mediates the depolarizing phase of action potentials in excitable membranes. Navs, also called VGSCs (voltage-gated sodium channels) or VDSCs (voltage-dependent sodium channels), operate by switching between closed and open conformations depending on the voltage difference across the membrane. In the open conformation they allow Na(+) ions to selectively pass through the pore, along their electrochemical gradient. The influx of Na+ ions provokes membrane depolarization, initiating the propagation of electrical signals throughout cells and tissues. Highly expressed in skeletal muscles, Nav1.4 generates the action potential crucial for muscle contraction. The polypeptide is Sodium channel protein type 4 subunit alpha (Mus musculus (Mouse)).